A 294-amino-acid polypeptide reads, in one-letter code: Foldase protein PrsA 1 (294 aa).

The signal sequence occupies residues 1–21; that stretch reads MTKLKKVMISVIAATLLLLAG. The N-palmitoyl cysteine moiety is linked to residue Cys-22. A lipid anchor (S-diacylglycerol cysteine) is attached at Cys-22. The region spanning 135 to 226 is the PpiC domain; sequence EPDITVRHIL…YGYHLIQLVK (92 aa).

It belongs to the PrsA family.

It is found in the cell membrane. The catalysed reaction is [protein]-peptidylproline (omega=180) = [protein]-peptidylproline (omega=0). Functionally, plays a major role in protein secretion by helping the post-translocational extracellular folding of several secreted proteins. The chain is Foldase protein PrsA 1 from Listeria monocytogenes serotype 4b (strain F2365).